The sequence spans 169 residues: Endoribonuclease YbeY (169 aa).

Positions 135, 139, and 145 each coordinate Zn(2+).

It belongs to the endoribonuclease YbeY family. Requires Zn(2+) as cofactor.

Its subcellular location is the cytoplasm. Its function is as follows. Single strand-specific metallo-endoribonuclease involved in late-stage 70S ribosome quality control and in maturation of the 3' terminus of the 16S rRNA. This is Endoribonuclease YbeY from Lachnospira eligens (strain ATCC 27750 / DSM 3376 / VPI C15-48 / C15-B4) (Eubacterium eligens).